The sequence spans 229 residues: Prolactin (229 aa).

The first 30 residues, 1–30 (MDSKGSAQKGSRLLLLLVVSNLLLCQGVVS), serve as a signal peptide directing secretion. A disulfide bond links cysteine 34 and cysteine 41. Serine 56, serine 64, and serine 120 each carry phosphoserine. Disulfide bonds link cysteine 88–cysteine 204 and cysteine 221–cysteine 229.

Belongs to the somatotropin/prolactin family. In terms of assembly, interacts with PRLR.

It is found in the secreted. In terms of biological role, prolactin acts primarily on the mammary gland by promoting lactation. The chain is Prolactin (PRL) from Capra hircus (Goat).